The following is a 400-amino-acid chain: Acetate kinase (400 aa).

Position 10 (Asn-10) interacts with Mg(2+). Residue Lys-17 participates in ATP binding. Arg-91 provides a ligand contact to substrate. The active-site Proton donor/acceptor is the Asp-150. Residues 210–214, 285–287, and 333–337 each bind ATP; these read HLGNG, DCR, and GIGEN. Glu-387 lines the Mg(2+) pocket.

The protein belongs to the acetokinase family. Homodimer. Mg(2+) serves as cofactor. The cofactor is Mn(2+).

It localises to the cytoplasm. The enzyme catalyses acetate + ATP = acetyl phosphate + ADP. It participates in metabolic intermediate biosynthesis; acetyl-CoA biosynthesis; acetyl-CoA from acetate: step 1/2. Its function is as follows. Catalyzes the formation of acetyl phosphate from acetate and ATP. Can also catalyze the reverse reaction. The polypeptide is Acetate kinase (Cronobacter sakazakii (strain ATCC BAA-894) (Enterobacter sakazakii)).